Reading from the N-terminus, the 418-residue chain is Inner capsid protein sigma-2 (418 aa).

The protein belongs to the orthoreovirus sigma-1 protein family. As to quaternary structure, interacts with protein mu-NS; in viral inclusions.

The protein resides in the virion. Its function is as follows. Inner capsid (core) component. The chain is Inner capsid protein sigma-2 (S2) from Mammalia (T2J).